Consider the following 1054-residue polypeptide: Proteoglycan 4 (1054 aa).

The N-terminal stretch at 1–24 (MGWKILPVCLSLLLPVVLIQQVSS) is a signal peptide. 2 consecutive SMB domains span residues 26–69 (DLSS…PELS) and 66–108 (PELS…EEVH). Intrachain disulfides connect Cys-30–Cys-34, Cys-30–Cys-46, Cys-34–Cys-64, Cys-44–Cys-46, Cys-44–Cys-57, Cys-50–Cys-56, Cys-57–Cys-64, Cys-70–Cys-74, Cys-70–Cys-86, Cys-74–Cys-104, Cys-84–Cys-86, Cys-84–Cys-97, Cys-90–Cys-96, and Cys-97–Cys-104. Residue Asn-109 is glycosylated (N-linked (GlcNAc...) asparagine). Positions 110 to 125 (STSPSSKTAPTPAGAS) are enriched in low complexity. The disordered stretch occupies residues 110–764 (STSPSSKTAP…PLIPGPPVLF (655 aa)). Ser-135 carries O-linked (GalNAc...) serine glycosylation. Residues 162-175 (QESSSSSSSSSSTI) are compositionally biased toward low complexity. Positions 188–200 (ELQKNPNVKDNKK) are enriched in basic and acidic residues. The segment covering 229 to 238 (TPPPPDPPTT) has biased composition (pro residues). O-linked (GalNAc...) threonine glycosylation is found at Thr-237 and Thr-250. Residues 286–295 (TTATNKQSSA) show a composition bias toward low complexity. A glycan (O-linked (GalNAc...) threonine) is linked at Thr-301. An O-linked (GalNAc...) serine glycan is attached at Ser-302. The segment covering 302–318 (SVKETRSAEKTSDKDVE) has biased composition (basic and acidic residues). An O-linked (GalNAc...) threonine glycan is attached at Thr-306. A glycan (O-linked (GalNAc...) serine) is linked at Ser-313. The stretch at 317–324 (VEPTSTTP) is one 1; approximate repeat. The interval 317–618 (VEPTSTTPKN…TPKKPEPTTT (302 aa)) is 37 X 8 AA repeats of K-X-P-X-P-T-T-X. A compositionally biased stretch (polar residues) spans 319-328 (PTSTTPKNSA). Residues 325 to 332 (KNSAPTTT) form a 2; approximate repeat. Residue Ser-327 is glycosylated (O-linked (GalNAc...) serine). Over residues 329 to 339 (PTTTKKPVTTT) the composition is skewed to low complexity. O-linked (GalNAc...) threonine glycosylation is found at Thr-330, Thr-338, Thr-354, Thr-362, Thr-369, Thr-377, Thr-378, Thr-385, Thr-386, Thr-393, and Thr-394. The 3; approximate repeat unit spans residues 333 to 340 (KKPVTTTK). A 4; approximate repeat occupies 349–356 (QEPEPTTA). Copy 5 of the repeat occupies 357 to 364 (KEPPPTTK). A compositionally biased stretch (basic and acidic residues) spans 364–399 (KKPEPTTRKEPEPTTPKEPEPTTPKEPEPTTPKEPE). The 6; approximate repeat unit spans residues 365 to 371 (KPEPTTR). Tandem repeats lie at residues 372-379 (KEPEPTTP), 380-387 (KEPEPTTP), 388-395 (KEPEPTTP), 396-403 (KEPEPTTP), and 404-411 (KEPPPTTK). Residues 400–426 (PTTPKEPPPTTKKPEPTTPKEPGPTTP) show a composition bias toward pro residues. A 12; approximate repeat occupies 412–418 (KPEPTTP). O-linked (GalNAc...) threonine glycosylation is found at Thr-416, Thr-417, Thr-424, Thr-432, Thr-433, Thr-440, Thr-441, and Thr-448. A run of 3 repeats spans residues 419 to 426 (KEPGPTTP), 427 to 434 (KEPEPTTT), and 435 to 442 (KEPEPTTT). Over residues 427–550 (KEPEPTTTKE…PEPTTPKKPE (124 aa)) the composition is skewed to basic and acidic residues. The stretch at 443–450 (KEPESTTR) is one 16; approximate repeat. A run of 21 repeats spans residues 451-458 (KEPEPTTP), 459-466 (KEPEPTTP), 467-474 (KEPEPTTL), 475-482 (KEPEPTTP), 483-490 (KEPEPTTP), 491-498 (KEPEPTTP), 499-506 (KEPEPTTP), 507-514 (KEPEPTTP), 515-522 (KEPEPTTP), 523-530 (KEPEPTTP), 531-538 (KEPEPTTP), 539-546 (KEPEPTTP), 547-554 (KKPEPTTP), 555-562 (KEPVPTTP), 563-570 (KEPEPTTP), 571-578 (KEPEPTTP), 579-586 (KEPEPTTR), 587-594 (KEPEPTTP), 595-602 (KEPEPTTP), 603-610 (KEPEPTTP), and 611-618 (KKPEPTTT). O-linked (GalNAc...) threonine glycans are attached at residues Thr-472, Thr-480, Thr-481, Thr-488, Thr-489, Thr-496, Thr-497, Thr-504, Thr-505, Thr-512, Thr-520, Thr-521, Thr-528, and Thr-529. A compositionally biased stretch (pro residues) spans 551–562 (PTTPKEPVPTTP). Residues Thr-553, Thr-560, Thr-561, Thr-568, Thr-569, Thr-576, and Thr-577 are each glycosylated (O-linked (GalNAc...) threonine). Basic and acidic residues predominate over residues 563-614 (KEPEPTTPKEPEPTTPKEPEPTTRKEPEPTTPKEPEPTTPKEPEPTTPKKPE). Residues Thr-592, Thr-600, and Thr-601 are each glycosylated (O-linked (GalNAc...) threonine). Residues 615 to 624 (PTTTSPKTTT) are compositionally biased toward low complexity. O-linked (GalNAc...) threonine glycosylation is found at Thr-622, Thr-624, Thr-628, Thr-629, and Thr-692. Basic residues predominate over residues 672–699 (KPTKKPTKAPKKPTSTKKPKTPKTRKPK). The span at 700 to 712 (TTPSPLKTTSATP) shows a compositional bias: low complexity. Polar residues predominate over residues 713 to 735 (ELNTTPLEVMLPTTTIPKQTPNP). Cys-795 and Cys-1053 are joined by a disulfide. Hemopexin repeat units lie at residues 797–840 (GKPV…VWGI) and 841–888 (PSPI…FGGL). Asn-808 is a glycosylation site (N-linked (GlcNAc...) asparagine). Residue Thr-810 is glycosylated (O-linked (GalNAc...) threonine). N-linked (GlcNAc...) asparagine glycosylation is present at Asn-938.

As to quaternary structure, homodimer; disulfide-linked. Post-translationally, N-glycosylated. O-glycosylated; contains glycosaminoglycan chondroitin sulfate and keratan sulfate. O-glycosylated with sialylated oligosaccharides which are predominantly represented by the monosialylated core type I structure, NeuNAcalpha2-3Galbeta1-3GalNAc, with smaller amounts of disialylated O-glycans. In terms of processing, the disulfide bond between Cys-795 and Cys-1053 is essential for protein cleavage. Post-translationally, proteolytically cleaved by cathepsin CTSG. In terms of tissue distribution, highly expressed in cartilage, bone and liver and weakly expressed in heart, brain and muscle. Expressed in the surface chondrocytes and in synovial intimal cells. Isoform B is expressed in bone, small intestine, muscle, testis, heart, liver and lung. Isoform C and isoform D are widely expressed.

The protein resides in the secreted. Plays a role in boundary lubrication within articulating joints. Prevents protein deposition onto cartilage from synovial fluid by controlling adhesion-dependent synovial growth and inhibiting the adhesion of synovial cells to the cartilage surface. This chain is Proteoglycan 4 (Prg4), found in Mus musculus (Mouse).